Consider the following 292-residue polypeptide: Cytochrome c1, heme protein, mitochondrial (292 aa).

The N-terminal 46 residues, 1–46 (MFRSFSTAAKQAVKGTYVQRAIVGGAAVVGIGASTMLYADSLTADA), are a transit peptide targeting the mitochondrion. Residues 47–253 (MTAAEHGLHA…SEPEHDERKR (207 aa)) are Mitochondrial intermembrane-facing. One can recognise a Cytochrome c domain in the interval 73 to 226 (SSIRRGYQVY…DLVEYEDGTP (154 aa)). Residues Cys86, Cys89, and His90 each contribute to the heme c site. Positions 117 to 137 (FEYDDEPDDQGNPKKRPGKLA) are disordered. Position 210 (Met210) interacts with heme c. The chain crosses the membrane as a helical span at residues 254-272 (LGLKAMIVLSSLYLLSVWV). At 273–292 (KKFKWASIKSRKIVFNPPKK) the chain is on the mitochondrial matrix side.

Belongs to the cytochrome c family. In terms of assembly, component of the ubiquinol-cytochrome c oxidoreductase (cytochrome b-c1 complex, complex III, CIII), a multisubunit enzyme composed of 3 respiratory subunits cytochrome b, cytochrome c1 and Rieske protein, 2 core protein subunits, and additional low-molecular weight protein subunits. The complex exists as an obligatory dimer and forms supercomplexes (SCs) in the inner mitochondrial membrane with cytochrome c oxidase (complex IV, CIV). Heme c is required as a cofactor.

Its subcellular location is the mitochondrion inner membrane. The enzyme catalyses a quinol + 2 Fe(III)-[cytochrome c](out) = a quinone + 2 Fe(II)-[cytochrome c](out) + 2 H(+)(out). In terms of biological role, component of the ubiquinol-cytochrome c oxidoreductase, a multisubunit transmembrane complex that is part of the mitochondrial electron transport chain which drives oxidative phosphorylation. The respiratory chain contains 3 multisubunit complexes succinate dehydrogenase (complex II, CII), ubiquinol-cytochrome c oxidoreductase (cytochrome b-c1 complex, complex III, CIII) and cytochrome c oxidase (complex IV, CIV), that cooperate to transfer electrons derived from NADH and succinate to molecular oxygen, creating an electrochemical gradient over the inner membrane that drives transmembrane transport and the ATP synthase. The cytochrome b-c1 complex catalyzes electron transfer from ubiquinol to cytochrome c, linking this redox reaction to translocation of protons across the mitochondrial inner membrane, with protons being carried across the membrane as hydrogens on the quinol. In the process called Q cycle, 2 protons are consumed from the matrix, 4 protons are released into the intermembrane space and 2 electrons are passed to cytochrome c. Cytochrome c1 is a catalytic core subunit containing a c-type heme. It transfers electrons from the [2Fe-2S] iron-sulfur cluster of the Rieske protein to cytochrome c. This Kluyveromyces lactis (strain ATCC 8585 / CBS 2359 / DSM 70799 / NBRC 1267 / NRRL Y-1140 / WM37) (Yeast) protein is Cytochrome c1, heme protein, mitochondrial (CYT1).